We begin with the raw amino-acid sequence, 30 residues long: Cycloviolacin-O18 (30 aa).

Positions 1–30 (GIPCGESCVYIPCTVTALAGCKCKSKVCYN) form a cross-link, cyclopeptide (Gly-Asn). Disulfide bonds link Cys-4-Cys-21, Cys-8-Cys-23, and Cys-13-Cys-28.

This is a cyclic peptide. Expressed in leaves, petals and petioles but not in roots and runners (at protein level).

Functionally, probably participates in a plant defense mechanism. The polypeptide is Cycloviolacin-O18 (Viola odorata (Sweet violet)).